The sequence spans 273 residues: HTH-type transcriptional activator RhaS (273 aa).

The HTH araC/xylS-type domain maps to 174–272 (YQLLDWLQNN…SQSPRDLRSQ (99 aa)). 2 DNA-binding regions (H-T-H motif) span residues 191 to 212 (PELADRFALPLRTLHRQLKNKT) and 239 to 262 (VTDIAYLCGFGDSNHFSTLFKREF).

As to quaternary structure, binds DNA as a dimer.

The protein resides in the cytoplasm. Functionally, activates expression of the rhaBAD and rhaT operons. In Yersinia pseudotuberculosis serotype O:1b (strain IP 31758), this protein is HTH-type transcriptional activator RhaS.